Here is a 226-residue protein sequence, read N- to C-terminus: Xanthocillin biosynthesis cluster protein F (226 aa).

It functions in the pathway secondary metabolite biosynthesis. Its function is as follows. Part of the gene cluster that mediates the biosynthesis of the isocyanide xanthocillin and its derivatives. The first step of the pathway consists in the conversion of tyrosine into a vinyl-isonitrile intermediate by the isocyanide synthase xanB. Subsequent oxidative dimerization of this intermediate to form xanthocillin may involve the cytochrome P450 monooxygenase xanG, whose expression is coregulated with that of XanB. Xanthocillin can be further modified by the isonitrile hydratase-like protein xanA which introduces N-formyl groups and the methyltransferase xanE which introduces methyl groups, leading to the production of several derivatives including fumiformamide. Finally, fumiformamide can be subject to both oxidative and reductive cyclization to yield melanocins E and F, respectively. This chain is Xanthocillin biosynthesis cluster protein F, found in Aspergillus fumigatus (strain ATCC MYA-4609 / CBS 101355 / FGSC A1100 / Af293) (Neosartorya fumigata).